The primary structure comprises 416 residues: Protein-glutamine gamma-glutamyltransferase (416 aa).

The segment at residues 1 to 29 is a signal peptide (tat-type signal); sequence MHKRRRLLAFATVGAVICTAGFTPSVSQA. Residues 30-85 constitute a propeptide that is removed on maturation; that stretch reads ASSGDGEEKGSYAETHGLTADDVESINALNERALTLGQPGKPPKELPPSASAPSRA. The tract at residues 64–103 is disordered; the sequence is TLGQPGKPPKELPPSASAPSRAPSDDRETPPAEPLDRMPE. Low complexity predominate over residues 76 to 85; that stretch reads PPSASAPSRA. Over residues 86 to 103 the composition is skewed to basic and acidic residues; it reads PSDDRETPPAEPLDRMPE. Residue C149 is part of the active site. Residues 290–331 form a disordered region; the sequence is GQDQRGSSDKRKYGDPEAFRPDQGTGLVDMSKDRSIPRSPAK. Residues 295-309 are compositionally biased toward basic and acidic residues; it reads GSSDKRKYGDPEAFR. Catalysis depends on residues D340 and H359.

The protein belongs to the bacterial TGase family. Post-translationally, predicted to be exported by the Tat system. The position of the signal peptide cleavage has not been experimentally proven.

It catalyses the reaction L-glutaminyl-[protein] + L-lysyl-[protein] = [protein]-L-lysyl-N(6)-5-L-glutamyl-[protein] + NH4(+). Its function is as follows. Catalyzes the cross-linking of proteins and the conjugation of polyamines to proteins. This is Protein-glutamine gamma-glutamyltransferase from Streptomyces cinnamoneus (Streptoverticillium cinnamoneum).